The chain runs to 244 residues: Capsid protein (244 aa).

Residues 1–24 (MSTSKRKRGDDANWSKRVTKKKPS) carry the Bipartite nuclear localization signal motif. Residues 1 to 39 (MSTSKRKRGDDANWSKRVTKKKPSSAGLKRAGSKADRPS) are disordered.

The protein belongs to the geminiviridae capsid protein family. As to quaternary structure, homomultimer. Interacts with the movement protein. Binds to single-stranded and double-stranded viral DNA.

Its subcellular location is the virion. It localises to the host nucleus. Its function is as follows. Encapsidates the viral genome into characteristic twinned ('geminate') particles. Binds the genomic viral ssDNA and shuttles it into and out of the cell nucleus. Plays a role in protection of the genome from degradation, virus acquisition and transmission by insect vectors, infectivity, and systemic movement. The CP of monopartite geminiviruses is absolutely essential for virus movement. This chain is Capsid protein, found in Maize streak virus genotype A (isolate Kenya) (MSV).